The primary structure comprises 172 residues: C-phycocyanin beta chain (172 aa).

Residue N72 is modified to N4-methylasparagine. (2R,3E)-phycocyanobilin-binding residues include C82 and C153.

The protein belongs to the phycobiliprotein family. As to quaternary structure, heterodimer of an alpha and a beta subunit, which further assembles into trimers and the trimers into hexamers. The basic functional unit of phycobiliproteins is a ring-shaped hexamer formed from two back-to-back trimers contacting via the alpha chain subunits. The trimers are composed of alpha/beta subunit heterodimers arranged around a three-fold axis of symmetry. The phycoerythrins also contain a gamma subunit which is located in the center of the hexamer. In terms of processing, contains two covalently linked bilin chromophores.

It is found in the plastid. The protein resides in the chloroplast thylakoid membrane. Its function is as follows. Light-harvesting photosynthetic bile pigment-protein from the phycobiliprotein complex (phycobilisome, PBS). Phycocyanin is the major phycobiliprotein in the PBS rod. This Pyropia haitanensis (Red seaweed) protein is C-phycocyanin beta chain (cpcB).